A 182-amino-acid chain; its full sequence is Peptidyl-prolyl cis-trans isomerase H (182 aa).

The PPIase cyclophilin-type domain maps to 15 to 181 (FFDITLGGEP…LDVVIAQCGE (167 aa)).

The protein belongs to the cyclophilin-type PPIase family. PPIase H subfamily.

It localises to the nucleus. It carries out the reaction [protein]-peptidylproline (omega=180) = [protein]-peptidylproline (omega=0). In terms of biological role, PPIases accelerate the folding of proteins. It catalyzes the cis-trans isomerization of proline imidic peptide bonds in oligopeptides. The protein is Peptidyl-prolyl cis-trans isomerase H (cyp-3) of Neurospora crassa (strain ATCC 24698 / 74-OR23-1A / CBS 708.71 / DSM 1257 / FGSC 987).